The following is an 88-amino-acid chain: Small ribosomal subunit protein uS17 (88 aa).

It belongs to the universal ribosomal protein uS17 family. In terms of assembly, part of the 30S ribosomal subunit.

Functionally, one of the primary rRNA binding proteins, it binds specifically to the 5'-end of 16S ribosomal RNA. The polypeptide is Small ribosomal subunit protein uS17 (Pseudomonas aeruginosa (strain LESB58)).